The following is a 453-amino-acid chain: Ribulose bisphosphate carboxylase large chain (453 aa).

Residues 1 to 2 (MS) constitute a propeptide that is removed on maturation. An N-acetylproline modification is found at proline 3. Lysine 14 bears the N6,N6,N6-trimethyllysine mark. Residues asparagine 123 and threonine 173 each coordinate substrate. Lysine 175 serves as the catalytic Proton acceptor. Lysine 177 contacts substrate. Mg(2+)-binding residues include lysine 201, aspartate 203, and glutamate 204. N6-carboxylysine is present on lysine 201. Histidine 294 functions as the Proton acceptor in the catalytic mechanism. Residues arginine 295, histidine 327, and serine 379 each contribute to the substrate site.

Belongs to the RuBisCO large chain family. Type I subfamily. As to quaternary structure, heterohexadecamer of 8 large chains and 8 small chains; disulfide-linked. The disulfide link is formed within the large subunit homodimers. The cofactor is Mg(2+). The disulfide bond which can form in the large chain dimeric partners within the hexadecamer appears to be associated with oxidative stress and protein turnover.

It is found in the plastid. It localises to the chloroplast. The enzyme catalyses 2 (2R)-3-phosphoglycerate + 2 H(+) = D-ribulose 1,5-bisphosphate + CO2 + H2O. It catalyses the reaction D-ribulose 1,5-bisphosphate + O2 = 2-phosphoglycolate + (2R)-3-phosphoglycerate + 2 H(+). Its function is as follows. RuBisCO catalyzes two reactions: the carboxylation of D-ribulose 1,5-bisphosphate, the primary event in carbon dioxide fixation, as well as the oxidative fragmentation of the pentose substrate in the photorespiration process. Both reactions occur simultaneously and in competition at the same active site. The sequence is that of Ribulose bisphosphate carboxylase large chain from Sherardia arvensis (Blue field-madder).